The primary structure comprises 452 residues: Peptidoglycan DL-endopeptidase CwlO (452 aa).

The signal sequence occupies residues 1 to 30; that stretch reads MKKKVYTFGLASILGTASLFTPFMNNTASA. The segment covering 28–38 has biased composition (polar residues); sequence ASAETSQQKQE. Disordered regions lie at residues 28-53 and 258-317; these read ASAETSQQKQEIQQKRSEVNSGIESK and AAAA…GSVV. Composition is skewed to basic and acidic residues over residues 39 to 53 and 263 to 275; these read IQQKRSEVNSGIESK and KAKEESATAEKSD. The span at 276–317 shows a compositional bias: low complexity; it reads SGSSSSSNSGSVSKSDGSSNSGSSSSKKSSSPSRNYSSGSVV. The NlpC/P60 domain maps to 321 to 450; it reads GNAIEAAIST…KAFNGVVRRV (130 aa). The Nucleophile role is filled by Cys-358. The active-site Proton acceptor is His-410. The active site involves Asn-422.

The protein belongs to the peptidase C40 family.

The protein localises to the secreted. Shows a cell wall hydrolytic DL-endopeptidase activity. The protein is Peptidoglycan DL-endopeptidase CwlO (cwlO) of Bacillus licheniformis (strain ATCC 14580 / DSM 13 / JCM 2505 / CCUG 7422 / NBRC 12200 / NCIMB 9375 / NCTC 10341 / NRRL NRS-1264 / Gibson 46).